A 1209-amino-acid chain; its full sequence is ATP-dependent helicase/nuclease subunit A (1209 aa).

Residues 9 to 482 (SQWTDEQWQA…IDLAKNFRSR (474 aa)) enclose the UvrD-like helicase ATP-binding domain. ATP is bound at residue 30–37 (AAAGSGKT). A UvrD-like helicase C-terminal domain is found at 510–798 (AALRFGAQDY…RMMTIHKSKG (289 aa)).

It belongs to the helicase family. AddA subfamily. Heterodimer of AddA and AddB/RexB. Mg(2+) serves as cofactor.

It carries out the reaction Couples ATP hydrolysis with the unwinding of duplex DNA by translocating in the 3'-5' direction.. The enzyme catalyses ATP + H2O = ADP + phosphate + H(+). The heterodimer acts as both an ATP-dependent DNA helicase and an ATP-dependent, dual-direction single-stranded exonuclease. Recognizes the chi site generating a DNA molecule suitable for the initiation of homologous recombination. The AddA nuclease domain is required for chi fragment generation; this subunit has the helicase and 3' -&gt; 5' nuclease activities. The polypeptide is ATP-dependent helicase/nuclease subunit A (Anoxybacillus flavithermus (strain DSM 21510 / WK1)).